The primary structure comprises 582 residues: ATP-dependent lipid A-core flippase (582 aa).

The next 5 helical transmembrane spans lie at 15–35 (LWPI…ALVI), 68–88 (YVVV…SYCL), 140–160 (GALI…AVML), 161–181 (YTSW…AVLI), and 254–274 (VQII…VPTI). In terms of domain architecture, ABC transmembrane type-1 spans 27-310 (VVSGIALVIN…LTNVNAQFQK (284 aa)). Residues 342 to 578 (LSFKNVTFTY…NGAYKQLHHI (237 aa)) form the ABC transporter domain. 376–383 (GRSGSGKS) is a binding site for ATP.

Belongs to the ABC transporter superfamily. Lipid exporter (TC 3.A.1.106) family. Homodimer.

It localises to the cell inner membrane. The enzyme catalyses ATP + H2O + lipid A-core oligosaccharideSide 1 = ADP + phosphate + lipid A-core oligosaccharideSide 2.. Functionally, involved in lipopolysaccharide (LPS) biosynthesis. Translocates lipid A-core from the inner to the outer leaflet of the inner membrane. Transmembrane domains (TMD) form a pore in the inner membrane and the ATP-binding domain (NBD) is responsible for energy generation. In Pasteurella multocida (strain Pm70), this protein is ATP-dependent lipid A-core flippase.